The sequence spans 134 residues: ATP synthase epsilon chain, chloroplastic (134 aa).

Belongs to the ATPase epsilon chain family. In terms of assembly, F-type ATPases have 2 components, CF(1) - the catalytic core - and CF(0) - the membrane proton channel. CF(1) has five subunits: alpha(3), beta(3), gamma(1), delta(1), epsilon(1). CF(0) has three main subunits: a, b and c.

The protein resides in the plastid. The protein localises to the chloroplast thylakoid membrane. Produces ATP from ADP in the presence of a proton gradient across the membrane. This is ATP synthase epsilon chain, chloroplastic from Amborella trichopoda.